The primary structure comprises 635 residues: Dihydrolipoyllysine-residue acetyltransferase component of pyruvate dehydrogenase complex, mitochondrial (635 aa).

In terms of domain architecture, Lipoyl-binding 1 spans 83–160 (GKEITMPALS…EINKPIAIIV (78 aa)). The residue at position 124 (lysine 124) is an N6-lipoyllysine. Residues 171 to 204 (KNYKPSSQASSTPVQEEAPKPKQEAPKKSTKTYP) form a disordered region. Positions 174–184 (KPSSQASSTPV) are enriched in polar residues. The span at 187–197 (EAPKPKQEAPK) shows a compositional bias: basic and acidic residues. Residues 206-283 (HKVVGMPALS…QINQPVCIIV (78 aa)) form the Lipoyl-binding 2 domain. An N6-lipoyllysine modification is found at lysine 247. The interval 295–338 (YSVEEQSSSSSSSSQESTPSSSSSSSQESTPSQSSSQQTTRKSG) is disordered. Low complexity predominate over residues 298–334 (EEQSSSSSSSSQESTPSSSSSSSQESTPSQSSSQQTT). One can recognise a Peripheral subunit-binding (PSBD) domain in the interval 342–379 (FATPAARFEASSKGYDLSAINGTGPNNRILKADVLEFV). The disordered stretch occupies residues 382–413 (KQEVAQQQQQQTTTTTKKPTTPTSSGEFTDIP). The span at 387 to 404 (QQQQQQTTTTTKKPTTPT) shows a compositional bias: low complexity. Positions 403–635 (PTSSGEFTDI…YVENPIKLIL (233 aa)) are catalytic.

Belongs to the 2-oxoacid dehydrogenase family. In terms of assembly, 20 to 30 alpha(2)-beta(2) tetramers of E1 + 6 homodimers of E3 + 60 copies of E2. Requires (R)-lipoate as cofactor.

The protein resides in the mitochondrion matrix. The enzyme catalyses N(6)-[(R)-dihydrolipoyl]-L-lysyl-[protein] + acetyl-CoA = N(6)-[(R)-S(8)-acetyldihydrolipoyl]-L-lysyl-[protein] + CoA. The pyruvate dehydrogenase complex catalyzes the overall conversion of pyruvate to acetyl-CoA and CO(2). It contains multiple copies of three enzymatic components: pyruvate dehydrogenase (E1), dihydrolipoamide acetyltransferase (E2) and lipoamide dehydrogenase (E3). In Dictyostelium discoideum (Social amoeba), this protein is Dihydrolipoyllysine-residue acetyltransferase component of pyruvate dehydrogenase complex, mitochondrial (pdhC).